Here is a 353-residue protein sequence, read N- to C-terminus: Photosystem II protein D1 (353 aa).

Position 2 is an N-acetylthreonine (threonine 2). Residue threonine 2 is modified to Phosphothreonine. The next 3 membrane-spanning stretches (helical) occupy residues 29–46 (YIGWFGVLMIPTLLTATS), 118–133 (HFLLGVACYMGREWEL), and 142–156 (WIAVAYSAPVAAATA). Residue histidine 118 coordinates chlorophyll a. Tyrosine 126 contacts pheophytin a. The [CaMn4O5] cluster site is built by aspartate 170 and glutamate 189. The chain crosses the membrane as a helical span at residues 197–218 (FHMLGVAGVFGGSLFSAMHGSL). Histidine 198 serves as a coordination point for chlorophyll a. Residues histidine 215 and 264–265 (SF) contribute to the a quinone site. Histidine 215 provides a ligand contact to Fe cation. Histidine 272 is a binding site for Fe cation. Residues 274–288 (FLAAWPVVGIWFTAL) form a helical membrane-spanning segment. [CaMn4O5] cluster contacts are provided by histidine 332, glutamate 333, aspartate 342, and alanine 344. The propeptide occupies 345–353 (AVEAPSTNG).

This sequence belongs to the reaction center PufL/M/PsbA/D family. In terms of assembly, PSII is composed of 1 copy each of membrane proteins PsbA, PsbB, PsbC, PsbD, PsbE, PsbF, PsbH, PsbI, PsbJ, PsbK, PsbL, PsbM, PsbT, PsbX, PsbY, PsbZ, Psb30/Ycf12, at least 3 peripheral proteins of the oxygen-evolving complex and a large number of cofactors. It forms dimeric complexes. The cofactor is The D1/D2 heterodimer binds P680, chlorophylls that are the primary electron donor of PSII, and subsequent electron acceptors. It shares a non-heme iron and each subunit binds pheophytin, quinone, additional chlorophylls, carotenoids and lipids. D1 provides most of the ligands for the Mn4-Ca-O5 cluster of the oxygen-evolving complex (OEC). There is also a Cl(-1) ion associated with D1 and D2, which is required for oxygen evolution. The PSII complex binds additional chlorophylls, carotenoids and specific lipids.. In terms of processing, tyr-161 forms a radical intermediate that is referred to as redox-active TyrZ, YZ or Y-Z. C-terminally processed by CTPA; processing is essential to allow assembly of the oxygen-evolving complex and thus photosynthetic growth.

Its subcellular location is the plastid. It is found in the chloroplast thylakoid membrane. It catalyses the reaction 2 a plastoquinone + 4 hnu + 2 H2O = 2 a plastoquinol + O2. Functionally, photosystem II (PSII) is a light-driven water:plastoquinone oxidoreductase that uses light energy to abstract electrons from H(2)O, generating O(2) and a proton gradient subsequently used for ATP formation. It consists of a core antenna complex that captures photons, and an electron transfer chain that converts photonic excitation into a charge separation. The D1/D2 (PsbA/PsbD) reaction center heterodimer binds P680, the primary electron donor of PSII as well as several subsequent electron acceptors. The chain is Photosystem II protein D1 from Oenothera parviflora (Small-flowered evening primrose).